Here is a 360-residue protein sequence, read N- to C-terminus: MSIRSNFVRLLKKQVSIIKLQKKCSHSVAVIGAPFSKGQKRRGVEHGPAAIRSAGLIERLSNLGCNVCDFGDLHFSKVPNDELYNSIVKHPRTVGLACKVLAEEVSKAVGAGHTCVTLGGDHSLAFGSITGHAQQCPDLCVIWVDAHADINTPLTTPSGNLHGQPVSFLLRELQDKVPPIPGFSWAKPCLSKSDIVYIGLRDLDPAEQFILKNYNISYYSMRHIDCMGIKKVMEKTFDQLLGRRDRPIHLSFDIDAFDPALAPATGTPVIGGLTYREGVYITEEIHNTGMLSAVDLVEVNPVLAATSEEVKATANLAVDVIASCFGQTREGAHTRADTIIDVLPTPSTSYESDNEEQVRI.

Residues H122, D145, H147, and D149 each contribute to the Mn(2+) site. Substrate-binding positions include 147–151 (HADIN), 158–160 (SGN), and D204. 2 residues coordinate Mn(2+): D253 and D255. Substrate-binding residues include T267 and E298.

It belongs to the arginase family. In terms of assembly, homotrimer. Mn(2+) is required as a cofactor. As to expression, expressed at differing tadpole stages in tail, intestine, hindlimb and trunk region. Strongest in tadpole tail.

It carries out the reaction L-arginine + H2O = urea + L-ornithine. The protein operates within nitrogen metabolism; urea cycle; L-ornithine and urea from L-arginine: step 1/1. As well as its role in the urea cycle, may be involved in tissue remodeling. The sequence is that of Arginase, non-hepatic 2 (arg2-b) from Xenopus laevis (African clawed frog).